The sequence spans 266 residues: Glucosamine-6-phosphate deaminase (266 aa).

Aspartate 72 (proton acceptor; for enolization step) is an active-site residue. Aspartate 141 serves as the catalytic For ring-opening step. Residue histidine 143 is the Proton acceptor; for ring-opening step of the active site. The active-site For ring-opening step is glutamate 148.

The protein belongs to the glucosamine/galactosamine-6-phosphate isomerase family. NagB subfamily. As to quaternary structure, homohexamer.

The catalysed reaction is alpha-D-glucosamine 6-phosphate + H2O = beta-D-fructose 6-phosphate + NH4(+). The protein operates within amino-sugar metabolism; N-acetylneuraminate degradation; D-fructose 6-phosphate from N-acetylneuraminate: step 5/5. Allosterically activated by N-acetylglucosamine 6-phosphate (GlcNAc6P). Functionally, catalyzes the reversible isomerization-deamination of glucosamine 6-phosphate (GlcN6P) to form fructose 6-phosphate (Fru6P) and ammonium ion. The sequence is that of Glucosamine-6-phosphate deaminase from Pectobacterium carotovorum subsp. carotovorum (strain PC1).